The sequence spans 418 residues: Peptide chain release factor subunit 1 (418 aa).

It belongs to the eukaryotic release factor 1 family. In terms of assembly, heterodimer of two subunits, one of which binds GTP.

It is found in the cytoplasm. Functionally, directs the termination of nascent peptide synthesis (translation) in response to the termination codons UAA, UAG and UGA. The chain is Peptide chain release factor subunit 1 from Haloarcula marismortui (strain ATCC 43049 / DSM 3752 / JCM 8966 / VKM B-1809) (Halobacterium marismortui).